The following is a 154-amino-acid chain: Thioredoxin-like protein CXXS2 (154 aa).

A Thioredoxin domain is found at 23–148 (RRNKTQARSQ…LQKKTAAAAN (126 aa)). Ser31 is subject to Phosphoserine.

The protein belongs to the thioredoxin family. As to expression, ubiquitous.

It localises to the cytoplasm. Its function is as follows. Possesses low disulfide reductase activity, but efficient protein disulfide isomerase activity. Does not possess deglutathionylation activity. This chain is Thioredoxin-like protein CXXS2 (CXXS2), found in Arabidopsis thaliana (Mouse-ear cress).